We begin with the raw amino-acid sequence, 214 residues long: MVGRLSLQDVPELVDAKKKGDGVLDSPDSGLPPSPSPSHWGLAAGGGGGERAAAPGTLEPDAAAATPAAPSPASLPLAPGCALRLCPLSFGEGVEFDPLPPKEVRYTSLVKYDSERHFIDDVQLPLGLAVASCSQTVTCVPNGTWRNYKAEVRFEPRHRPTRFLSTTIVYPKYPKAVYTTTLDYNCRKTLRRFLSSVELEAAELPGSDDLSDEC.

The segment at 1 to 56 (MVGRLSLQDVPELVDAKKKGDGVLDSPDSGLPPSPSPSHWGLAAGGGGGERAAAPG) is disordered. 2 positions are modified to phosphoserine: Ser-6 and Ser-26.

It belongs to the Refilin family. As to quaternary structure, interacts with FLNA and FLNB.

It localises to the cytoplasm. The protein resides in the cytoskeleton. Functionally, involved in the regulation of the perinuclear actin network and nuclear shape through interaction with filamins. Plays an essential role in the formation of cartilaginous skeletal elements. The sequence is that of Refilin-B from Homo sapiens (Human).